The chain runs to 504 residues: Maturase K (504 aa).

It belongs to the intron maturase 2 family. MatK subfamily.

It localises to the plastid. It is found in the chloroplast. Usually encoded in the trnK tRNA gene intron. Probably assists in splicing its own and other chloroplast group II introns. This chain is Maturase K, found in Aucuba japonica (Japanese laurel).